A 363-amino-acid chain; its full sequence is Chorismate synthase (363 aa).

Arg-48 and Arg-54 together coordinate NADP(+). FMN-binding positions include 131–133 (RSS), 244–245 (NA), Gly-288, 303–307 (KPTSS), and Arg-329.

Belongs to the chorismate synthase family. Homotetramer. It depends on FMNH2 as a cofactor.

The catalysed reaction is 5-O-(1-carboxyvinyl)-3-phosphoshikimate = chorismate + phosphate. The protein operates within metabolic intermediate biosynthesis; chorismate biosynthesis; chorismate from D-erythrose 4-phosphate and phosphoenolpyruvate: step 7/7. Its function is as follows. Catalyzes the anti-1,4-elimination of the C-3 phosphate and the C-6 proR hydrogen from 5-enolpyruvylshikimate-3-phosphate (EPSP) to yield chorismate, which is the branch point compound that serves as the starting substrate for the three terminal pathways of aromatic amino acid biosynthesis. This reaction introduces a second double bond into the aromatic ring system. The chain is Chorismate synthase from Maricaulis maris (strain MCS10) (Caulobacter maris).